The sequence spans 575 residues: Phosphoenolpyruvate-protein phosphotransferase (575 aa).

His-189 acts as the Tele-phosphohistidine intermediate in catalysis. Phosphoenolpyruvate contacts are provided by Arg-296 and Arg-332. Residues Glu-431 and Asp-455 each coordinate Mg(2+). Residues 454 to 455 and Arg-465 contribute to the phosphoenolpyruvate site; that span reads ND. The active-site Proton donor is Cys-502.

It belongs to the PEP-utilizing enzyme family. Homodimer. Mg(2+) is required as a cofactor.

Its subcellular location is the cytoplasm. It catalyses the reaction L-histidyl-[protein] + phosphoenolpyruvate = N(pros)-phospho-L-histidyl-[protein] + pyruvate. General (non sugar-specific) component of the phosphoenolpyruvate-dependent sugar phosphotransferase system (sugar PTS). This major carbohydrate active-transport system catalyzes the phosphorylation of incoming sugar substrates concomitantly with their translocation across the cell membrane. Enzyme I transfers the phosphoryl group from phosphoenolpyruvate (PEP) to the phosphoryl carrier protein (HPr). In Haemophilus influenzae (strain ATCC 51907 / DSM 11121 / KW20 / Rd), this protein is Phosphoenolpyruvate-protein phosphotransferase (ptsI).